An 85-amino-acid chain; its full sequence is Small ribosomal subunit protein uS17 (85 aa).

This sequence belongs to the universal ribosomal protein uS17 family. Part of the 30S ribosomal subunit.

Its function is as follows. One of the primary rRNA binding proteins, it binds specifically to the 5'-end of 16S ribosomal RNA. This chain is Small ribosomal subunit protein uS17, found in Blochmanniella floridana.